We begin with the raw amino-acid sequence, 999 residues long: Probable beta-galactosidase C (999 aa).

A signal peptide spans 1 to 21 (MFFFRFLTTVLLLFNAKLLVA). Asn-25 is a glycosylation site (N-linked (GlcNAc...) asparagine). Substrate is bound by residues Tyr-80, Asn-125, Glu-127, and Asn-185. Glu-186 functions as the Proton donor in the catalytic mechanism. Asn-195 is a glycosylation site (N-linked (GlcNAc...) asparagine). Tyr-249 serves as a coordination point for substrate. An intrachain disulfide couples Cys-255 to Cys-302. Asn-274 is a glycosylation site (N-linked (GlcNAc...) asparagine). Glu-285 serves as the catalytic Nucleophile. Tyr-351 is a substrate binding site. N-linked (GlcNAc...) asparagine glycans are attached at residues Asn-389, Asn-441, Asn-512, Asn-519, Asn-600, Asn-675, Asn-713, Asn-757, Asn-808, and Asn-897.

It belongs to the glycosyl hydrolase 35 family.

The protein localises to the secreted. It catalyses the reaction Hydrolysis of terminal non-reducing beta-D-galactose residues in beta-D-galactosides.. Cleaves beta-linked terminal galactosyl residues from gangliosides, glycoproteins, and glycosaminoglycans. This is Probable beta-galactosidase C (lacC) from Talaromyces marneffei (strain ATCC 18224 / CBS 334.59 / QM 7333) (Penicillium marneffei).